We begin with the raw amino-acid sequence, 101 residues long: NAD(P)H-quinone oxidoreductase subunit 4L, chloroplastic (101 aa).

3 helical membrane passes run 2–22, 32–52, and 61–81; these read MLEH…YGLI, MCLE…SDLF, and IFSI…PAIV.

This sequence belongs to the complex I subunit 4L family. NDH is composed of at least 16 different subunits, 5 of which are encoded in the nucleus.

The protein resides in the plastid. Its subcellular location is the chloroplast thylakoid membrane. The enzyme catalyses a plastoquinone + NADH + (n+1) H(+)(in) = a plastoquinol + NAD(+) + n H(+)(out). The catalysed reaction is a plastoquinone + NADPH + (n+1) H(+)(in) = a plastoquinol + NADP(+) + n H(+)(out). In terms of biological role, NDH shuttles electrons from NAD(P)H:plastoquinone, via FMN and iron-sulfur (Fe-S) centers, to quinones in the photosynthetic chain and possibly in a chloroplast respiratory chain. The immediate electron acceptor for the enzyme in this species is believed to be plastoquinone. Couples the redox reaction to proton translocation, and thus conserves the redox energy in a proton gradient. The polypeptide is NAD(P)H-quinone oxidoreductase subunit 4L, chloroplastic (Ceratophyllum demersum (Rigid hornwort)).